The sequence spans 102 residues: Iron-sulfur cluster assembly protein CyaY (102 aa).

This sequence belongs to the frataxin family.

Its function is as follows. Involved in iron-sulfur (Fe-S) cluster assembly. May act as a regulator of Fe-S biogenesis. The protein is Iron-sulfur cluster assembly protein CyaY of Actinobacillus succinogenes (strain ATCC 55618 / DSM 22257 / CCUG 43843 / 130Z).